The chain runs to 116 residues: Probable transcriptional regulator WhiB6 (116 aa).

[4Fe-4S] cluster is bound by residues Cys12, Cys53, Cys56, and Cys62. The 4Fe-4S Wbl-type domain occupies 33-86 (VCTQDPDRWTTTPDDEAKTLCRACPRRWLCARDAVESAGAEGLWAGVVIPESGR).

It belongs to the WhiB family. It depends on [4Fe-4S] cluster as a cofactor. Post-translationally, the Fe-S cluster can be nitrosylated by nitric oxide (NO). In terms of processing, upon Fe-S cluster removal intramolecular disulfide bonds are formed.

The protein localises to the cytoplasm. In terms of biological role, acts as a transcriptional regulator. Probably redox-responsive. The apo- but not holo-form probably binds DNA. In Mycobacterium tuberculosis (strain CDC 1551 / Oshkosh), this protein is Probable transcriptional regulator WhiB6 (whiB6).